Reading from the N-terminus, the 226-residue chain is UPF0758 protein SPT_1135 (226 aa).

Positions 103–225 (SILSSQKLAK…YFSYREKTDL (123 aa)) constitute an MPN domain. Zn(2+) contacts are provided by His174, His176, and Asp187. A JAMM motif motif is present at residues 174–187 (HNHPSGAVAPSQND).

The protein belongs to the UPF0758 family.

This Streptococcus pneumoniae (strain Taiwan19F-14) protein is UPF0758 protein SPT_1135.